A 110-amino-acid polypeptide reads, in one-letter code: Endoribonuclease SymE (110 aa).

One can recognise a SpoVT-AbrB domain in the interval 29–74; it reads SSYPEYTRIPAITLKGQWLEDAGFTTGTQVDVRVMNGCIVLTAQQP.

This sequence belongs to the SymE family.

Its subcellular location is the cytoplasm. Its function is as follows. Involved in the degradation and recycling of damaged RNA. It is itself a target for degradation by the ATP-dependent protease Lon. The polypeptide is Endoribonuclease SymE (Salmonella choleraesuis (strain SC-B67)).